The following is a 217-amino-acid chain: Small ribosomal subunit protein uS3 (217 aa).

Residues isoleucine 38–lysine 106 enclose the KH type-2 domain.

It belongs to the universal ribosomal protein uS3 family. As to quaternary structure, part of the 30S ribosomal subunit. Forms a tight complex with proteins S10 and S14.

Its function is as follows. Binds the lower part of the 30S subunit head. Binds mRNA in the 70S ribosome, positioning it for translation. This is Small ribosomal subunit protein uS3 from Lactococcus lactis subsp. cremoris (strain MG1363).